The chain runs to 348 residues: MRIFLLCLALSLSVFAATIKELTNVVGVRDNQLIGYGLVVGLNGSGDGTSSEFTLQSISNMLQGMNVKVSPGDIKSKNTAAVMVTAKLPAFARSGDKLDVSVASLGDAKSLQGGTLLMTALKGVDGEIYAVAQGSLAIGGLSPRPGAAGTHSTSANVINGAVVEREIPQNFSQSEDLILSLKEADFKTANNIERVLNTIFDTDIAKALDSRTIKLTKPEEFSHVEFMARVLEQDIAYTPESKVIIDERTGTIVAGVNIEVEPILITHKDITIKIDPNNTVALGQNEIDMKDGGILDPVSNTLKITNNKTTVANIARMLNKLGAAPNDIIAIMQNLKRAGAISAELEVI.

A signal peptide spans 1–16 (MRIFLLCLALSLSVFA).

It belongs to the FlgI family. As to quaternary structure, the basal body constitutes a major portion of the flagellar organelle and consists of four rings (L,P,S, and M) mounted on a central rod.

The protein resides in the periplasm. It is found in the bacterial flagellum basal body. Assembles around the rod to form the L-ring and probably protects the motor/basal body from shearing forces during rotation. In Campylobacter lari (strain RM2100 / D67 / ATCC BAA-1060), this protein is Flagellar P-ring protein.